A 160-amino-acid chain; its full sequence is Transcriptional repressor NrdR (160 aa).

Residues 1-11 (MRCPSCNSLDT) are compositionally biased toward polar residues. Positions 1–20 (MRCPSCNSLDTQVKDSRPTE) are disordered. A zinc finger spans residues 3–34 (CPSCNSLDTQVKDSRPTEDSAVIRRRRVCMAC). The ATP-cone domain occupies 49–139 (LTVIKRNGRR…VYRNFREAKD (91 aa)).

Belongs to the NrdR family. Zn(2+) serves as cofactor.

In terms of biological role, negatively regulates transcription of bacterial ribonucleotide reductase nrd genes and operons by binding to NrdR-boxes. The sequence is that of Transcriptional repressor NrdR from Nitrobacter winogradskyi (strain ATCC 25391 / DSM 10237 / CIP 104748 / NCIMB 11846 / Nb-255).